The sequence spans 275 residues: Polyamine aminopropyltransferase (275 aa).

Residues 2–235 (EFWFTEKQTE…GMWTFTIGSK (234 aa)) form the PABS domain. Gln-31 lines the S-methyl-5'-thioadenosine pocket. The spermidine site is built by His-62 and Asp-86. Residues Asp-106 and 137–138 (DG) contribute to the S-methyl-5'-thioadenosine site. The Proton acceptor role is filled by Asp-155. A spermidine-binding site is contributed by 155–158 (DSTE). Position 162 (Pro-162) interacts with S-methyl-5'-thioadenosine.

It belongs to the spermidine/spermine synthase family. Homodimer or homotetramer.

The protein resides in the cytoplasm. It carries out the reaction S-adenosyl 3-(methylsulfanyl)propylamine + putrescine = S-methyl-5'-thioadenosine + spermidine + H(+). It participates in amine and polyamine biosynthesis; spermidine biosynthesis; spermidine from putrescine: step 1/1. Functionally, catalyzes the irreversible transfer of a propylamine group from the amino donor S-adenosylmethioninamine (decarboxy-AdoMet) to putrescine (1,4-diaminobutane) to yield spermidine. The protein is Polyamine aminopropyltransferase of Shouchella clausii (strain KSM-K16) (Alkalihalobacillus clausii).